We begin with the raw amino-acid sequence, 183 residues long: Bifunctional protein PyrR (183 aa).

Residues 102–114 (VVLVDDVLYTGRT) carry the PRPP-binding motif.

The protein belongs to the purine/pyrimidine phosphoribosyltransferase family. PyrR subfamily. As to quaternary structure, homodimer and homohexamer; in equilibrium.

The enzyme catalyses UMP + diphosphate = 5-phospho-alpha-D-ribose 1-diphosphate + uracil. Regulates transcriptional attenuation of the pyrimidine nucleotide (pyr) operon by binding in a uridine-dependent manner to specific sites on pyr mRNA. This disrupts an antiterminator hairpin in the RNA and favors formation of a downstream transcription terminator, leading to a reduced expression of downstream genes. Its function is as follows. Also displays a weak uracil phosphoribosyltransferase activity which is not physiologically significant. This is Bifunctional protein PyrR from Listeria monocytogenes serotype 4b (strain CLIP80459).